The following is a 475-amino-acid chain: Ribosomal protein uS12 methylthiotransferase RimO (475 aa).

Residues 36–150 (NKINFISLGC…ILKAVQSTQK (115 aa)) form the MTTase N-terminal domain. [4Fe-4S] cluster-binding residues include Cys45, Cys81, Cys113, Cys185, Cys189, and Cys192. The 233-residue stretch at 171-403 (STPKHYAYLK…MQVQKKVVKK (233 aa)) folds into the Radical SAM core domain. One can recognise a TRAM domain in the interval 406–475 (KKMIGKKIAV…ADYDLVGHVI (70 aa)).

It belongs to the methylthiotransferase family. RimO subfamily. It depends on [4Fe-4S] cluster as a cofactor.

The protein localises to the cytoplasm. It carries out the reaction L-aspartate(89)-[ribosomal protein uS12]-hydrogen + (sulfur carrier)-SH + AH2 + 2 S-adenosyl-L-methionine = 3-methylsulfanyl-L-aspartate(89)-[ribosomal protein uS12]-hydrogen + (sulfur carrier)-H + 5'-deoxyadenosine + L-methionine + A + S-adenosyl-L-homocysteine + 2 H(+). Functionally, catalyzes the methylthiolation of an aspartic acid residue of ribosomal protein uS12. In Protochlamydia amoebophila (strain UWE25), this protein is Ribosomal protein uS12 methylthiotransferase RimO.